A 149-amino-acid chain; its full sequence is 3-dehydroquinate dehydratase (149 aa).

Tyrosine 26 (proton acceptor) is an active-site residue. Residues asparagine 77, histidine 83, and aspartate 90 each contribute to the substrate site. Histidine 103 acts as the Proton donor in catalysis. Substrate is bound by residues 104 to 105 (LS) and arginine 114.

The protein belongs to the type-II 3-dehydroquinase family. Homododecamer.

It catalyses the reaction 3-dehydroquinate = 3-dehydroshikimate + H2O. It participates in metabolic intermediate biosynthesis; chorismate biosynthesis; chorismate from D-erythrose 4-phosphate and phosphoenolpyruvate: step 3/7. Its function is as follows. Catalyzes a trans-dehydration via an enolate intermediate. The sequence is that of 3-dehydroquinate dehydratase from Haemophilus influenzae (strain PittEE).